The chain runs to 322 residues: tRNA U34 carboxymethyltransferase (322 aa).

Residues Lys-91, Trp-105, Lys-110, Gly-129, Leu-179–Glu-180, Met-195, Tyr-199, and Arg-314 contribute to the carboxy-S-adenosyl-L-methionine site.

It belongs to the class I-like SAM-binding methyltransferase superfamily. CmoB family. Homotetramer.

The enzyme catalyses carboxy-S-adenosyl-L-methionine + 5-hydroxyuridine(34) in tRNA = 5-carboxymethoxyuridine(34) in tRNA + S-adenosyl-L-homocysteine + H(+). Functionally, catalyzes carboxymethyl transfer from carboxy-S-adenosyl-L-methionine (Cx-SAM) to 5-hydroxyuridine (ho5U) to form 5-carboxymethoxyuridine (cmo5U) at position 34 in tRNAs. The protein is tRNA U34 carboxymethyltransferase of Pseudomonas paraeruginosa (strain DSM 24068 / PA7) (Pseudomonas aeruginosa (strain PA7)).